The chain runs to 363 residues: Chorismate synthase (363 aa).

NADP(+) contacts are provided by Arg48 and Arg54. Residues 125–127 (RSS), 237–238 (NA), Gly277, 292–296 (KPTSS), and Arg318 each bind FMN.

Belongs to the chorismate synthase family. In terms of assembly, homotetramer. FMNH2 is required as a cofactor.

The catalysed reaction is 5-O-(1-carboxyvinyl)-3-phosphoshikimate = chorismate + phosphate. It participates in metabolic intermediate biosynthesis; chorismate biosynthesis; chorismate from D-erythrose 4-phosphate and phosphoenolpyruvate: step 7/7. Catalyzes the anti-1,4-elimination of the C-3 phosphate and the C-6 proR hydrogen from 5-enolpyruvylshikimate-3-phosphate (EPSP) to yield chorismate, which is the branch point compound that serves as the starting substrate for the three terminal pathways of aromatic amino acid biosynthesis. This reaction introduces a second double bond into the aromatic ring system. The polypeptide is Chorismate synthase (Pseudomonas savastanoi pv. phaseolicola (strain 1448A / Race 6) (Pseudomonas syringae pv. phaseolicola (strain 1448A / Race 6))).